A 316-amino-acid polypeptide reads, in one-letter code: MTKLKLKIASRRSKLAMVQTLWVKEQLEKNIPNLEVSIESMATQGDKILDVALAKIGDKGLFTKELEAQMLIGKADIAVHSLKDLPTNLPDGLKLGCITKREDPSDALVVNKKNEIYQLESLPAGSIVGTSSLRRLAQLRYKFPYLNFKDIRGNVITRIEKLDSGEFDCIILAAAGLKRLGFESRIHQIIPNEISLHAVGQGALGIECKSEDKEVLKIISVLEDKASSQKCLAERSFLRELEGGCQVPIGVNSSIQNDEICLKGMVASIDGKKLIKDESSGNVKYPEEVGKKLAEKLKLQGADKILSEIFEQFRDK.

Cys-245 is subject to S-(dipyrrolylmethanemethyl)cysteine.

This sequence belongs to the HMBS family. In terms of assembly, monomer. It depends on dipyrromethane as a cofactor.

It catalyses the reaction 4 porphobilinogen + H2O = hydroxymethylbilane + 4 NH4(+). It functions in the pathway porphyrin-containing compound metabolism; protoporphyrin-IX biosynthesis; coproporphyrinogen-III from 5-aminolevulinate: step 2/4. It participates in porphyrin-containing compound metabolism; chlorophyll biosynthesis. Its function is as follows. Tetrapolymerization of the monopyrrole PBG into the hydroxymethylbilane pre-uroporphyrinogen in several discrete steps. In Prochlorococcus marinus (strain MIT 9515), this protein is Porphobilinogen deaminase.